Reading from the N-terminus, the 782-residue chain is DnaJ homolog subfamily C member 16 (782 aa).

The N-terminal stretch at 1–25 (MEVRKLSISWQFLIVLVLILQILSA) is a signal peptide. Residues 26–535 (LDFDPYKVLG…DSIFHNNWRE (510 aa)) lie on the Cytoplasmic side of the membrane. In terms of domain architecture, J spans 29-93 (DPYKVLGVSR…EKRSNYDQYG (65 aa)). The region spanning 119-247 (FYFDESFFHF…LRQFVESLLP (129 aa)) is the Thioredoxin domain. The helical; Anchor for type IV membrane protein transmembrane segment at 536–556 (MMPLLSLIFSALFILFGTVIV) threads the bilayer. The Extracellular segment spans residues 557 to 782 (QAFSDSSDER…FYIPSWPELD (226 aa)). The interval 562–593 (SSDERESSPPDKEEAQEKTGKTEPSFTKENSS) is disordered. A compositionally biased stretch (basic and acidic residues) spans 563–582 (SDERESSPPDKEEAQEKTGK). The span at 583-593 (TEPSFTKENSS) shows a compositional bias: polar residues. Residue asparagine 631 is glycosylated (N-linked (GlcNAc...) asparagine).

The protein resides in the endoplasmic reticulum membrane. Functionally, plays an important role in regulating the size of autophagosomes during the formation process. This Pongo abelii (Sumatran orangutan) protein is DnaJ homolog subfamily C member 16 (DNAJC16).